We begin with the raw amino-acid sequence, 273 residues long: Ribosomal RNA small subunit methyltransferase A (273 aa).

S-adenosyl-L-methionine-binding residues include asparagine 18, leucine 20, glycine 45, glutamate 66, aspartate 91, and asparagine 113.

It belongs to the class I-like SAM-binding methyltransferase superfamily. rRNA adenine N(6)-methyltransferase family. RsmA subfamily.

It is found in the cytoplasm. It carries out the reaction adenosine(1518)/adenosine(1519) in 16S rRNA + 4 S-adenosyl-L-methionine = N(6)-dimethyladenosine(1518)/N(6)-dimethyladenosine(1519) in 16S rRNA + 4 S-adenosyl-L-homocysteine + 4 H(+). Its function is as follows. Specifically dimethylates two adjacent adenosines (A1518 and A1519) in the loop of a conserved hairpin near the 3'-end of 16S rRNA in the 30S particle. May play a critical role in biogenesis of 30S subunits. The chain is Ribosomal RNA small subunit methyltransferase A from Escherichia coli O139:H28 (strain E24377A / ETEC).